The chain runs to 360 residues: Melanoma-associated antigen B16 (360 aa).

Residues 1–118 (MSQKNPEYAA…GNSVIPPDQP (118 aa)) are disordered. Positions 9–19 (AADHDHTREEM) are enriched in basic and acidic residues. The segment covering 63–98 (CSSSQLLTASNQEDPAYETPSTSRGLQHPYVSSSES) has biased composition (polar residues). Residues 125–324 (IDGKVNFLVN…TVFPSQYEEA (200 aa)) enclose the MAGE domain. Positions 340–360 (AGPSSASGESSSDMGSNVPHI) are disordered. Residues 341–360 (GPSSASGESSSDMGSNVPHI) show a composition bias toward low complexity.

This chain is Melanoma-associated antigen B16 (Mageb16), found in Rattus norvegicus (Rat).